Reading from the N-terminus, the 329-residue chain is GTP 3',8-cyclase (329 aa).

Residues 1–229 (MNPVDYLRIS…TAFVQGNGPA (229 aa)) enclose the Radical SAM core domain. Arg8 is a GTP binding site. Cys15 and Cys19 together coordinate [4Fe-4S] cluster. S-adenosyl-L-methionine is bound at residue Tyr21. Cys22 contributes to the [4Fe-4S] cluster binding site. A GTP-binding site is contributed by Arg60. Position 64 (Gly64) interacts with S-adenosyl-L-methionine. GTP is bound at residue Thr91. Ser115 contacts S-adenosyl-L-methionine. A GTP-binding site is contributed by Lys155. Met189 contacts S-adenosyl-L-methionine. [4Fe-4S] cluster-binding residues include Cys252 and Cys255. A GTP-binding site is contributed by 257–259 (RMR). Cys269 provides a ligand contact to [4Fe-4S] cluster.

It belongs to the radical SAM superfamily. MoaA family. As to quaternary structure, monomer and homodimer. [4Fe-4S] cluster is required as a cofactor.

It catalyses the reaction GTP + AH2 + S-adenosyl-L-methionine = (8S)-3',8-cyclo-7,8-dihydroguanosine 5'-triphosphate + 5'-deoxyadenosine + L-methionine + A + H(+). It functions in the pathway cofactor biosynthesis; molybdopterin biosynthesis. Catalyzes the cyclization of GTP to (8S)-3',8-cyclo-7,8-dihydroguanosine 5'-triphosphate. This chain is GTP 3',8-cyclase, found in Picosynechococcus sp. (strain ATCC 27264 / PCC 7002 / PR-6) (Agmenellum quadruplicatum).